A 322-amino-acid polypeptide reads, in one-letter code: HPr kinase/phosphorylase (322 aa).

Catalysis depends on residues His-146 and Lys-167. An ATP-binding site is contributed by 161 to 168 (GDSGLGKS). Residue Ser-168 coordinates Mg(2+). Asp-185 serves as the catalytic Proton acceptor; for phosphorylation activity. Proton donor; for dephosphorylation activity. An important for the catalytic mechanism of both phosphorylation and dephosphorylation region spans residues 209–218 (LEVRGLGLLD). Position 210 (Glu-210) interacts with Mg(2+). Residue Arg-250 is part of the active site. The segment at 271 to 276 (QVAAGR) is important for the catalytic mechanism of dephosphorylation.

The protein belongs to the HPrK/P family. As to quaternary structure, homohexamer. It depends on Mg(2+) as a cofactor.

The enzyme catalyses [HPr protein]-L-serine + ATP = [HPr protein]-O-phospho-L-serine + ADP + H(+). The catalysed reaction is [HPr protein]-O-phospho-L-serine + phosphate + H(+) = [HPr protein]-L-serine + diphosphate. In terms of biological role, catalyzes the ATP- as well as the pyrophosphate-dependent phosphorylation of a specific serine residue in HPr, a phosphocarrier protein of the phosphoenolpyruvate-dependent sugar phosphotransferase system (PTS). HprK/P also catalyzes the pyrophosphate-producing, inorganic phosphate-dependent dephosphorylation (phosphorolysis) of seryl-phosphorylated HPr (P-Ser-HPr). The sequence is that of HPr kinase/phosphorylase from Burkholderia cenocepacia (strain HI2424).